The following is a 57-amino-acid chain: Large ribosomal subunit protein bL32 (57 aa).

The segment at M1–H38 is disordered. Residues A24–T33 are compositionally biased toward polar residues.

It belongs to the bacterial ribosomal protein bL32 family.

The chain is Large ribosomal subunit protein bL32 from Enterobacter sp. (strain 638).